Reading from the N-terminus, the 297-residue chain is Acetaldehyde dehydrogenase (297 aa).

15-18 (SGSI) provides a ligand contact to NAD(+). Residue Cys130 is the Acyl-thioester intermediate of the active site. NAD(+)-binding positions include 162–170 (SAGIATREN) and Asn272.

This sequence belongs to the acetaldehyde dehydrogenase family.

It catalyses the reaction acetaldehyde + NAD(+) + CoA = acetyl-CoA + NADH + H(+). The chain is Acetaldehyde dehydrogenase from Burkholderia pseudomallei (strain 1106a).